We begin with the raw amino-acid sequence, 635 residues long: MYDLLKTIDDPAALRRLDRRQLQPLADELRAFVLDSVSQTGGHLSSNLGTVELTIALHYVFDTPHDRIVWDVGHQTYPHKILTGRRDQMHTLRQLGGISGFPKRDESEYDTFGTAHSSTSISAALGMAVASKLKGDNRMGIAVIGDGAMTAGMAFEAMNNAGVEDDVPLLVILNDNDMSISPPVGALNRHLARLMSGRFYAAARAGVERVLRVAPPMLDLARKLEEHAKGMIVPATLFEEFGFNYIGPIDGHDLDSLIPTLQNIKELRGPQFLHVVTKKGQGYKLAEADPVLYHGPGKFNPAEGIKPAATPSKKTYTQVFGEWLCDAAELDARVIGITPAMREGSGMVEFEKRFPDRYFDVGIAEQHAVTFAGGLAAEGMKPVVAIYSTFLQRAYDQLIHDVALQNLPVVFAIDRAGLVGADGATHAGAYDLAFLRCIPNMTVMAASDENECRQMLYTALQQPNPTAVRYPRGAGTGVATIKQMTALPLGKGEIRRETSQPAGKRIAILAFGTMVAPSLAAAEQLDATVANMRFVKPLDADLVRQLAETHDAIVTVEEGCVMGGAGSACVEALLASGVTRPVLQLGLPDRFIDHGDPAKLLAACGLDAVGITKSIRERFLLSGAVGGQSSVKRVA.

Thiamine diphosphate contacts are provided by residues His74 and Ala115–Ser117. Asp146 is a binding site for Mg(2+). Thiamine diphosphate-binding positions include Gly147–Ala148, Asn176, Tyr283, and Glu365. Asn176 contributes to the Mg(2+) binding site.

Belongs to the transketolase family. DXPS subfamily. In terms of assembly, homodimer. Requires Mg(2+) as cofactor. The cofactor is thiamine diphosphate.

The enzyme catalyses D-glyceraldehyde 3-phosphate + pyruvate + H(+) = 1-deoxy-D-xylulose 5-phosphate + CO2. The protein operates within metabolic intermediate biosynthesis; 1-deoxy-D-xylulose 5-phosphate biosynthesis; 1-deoxy-D-xylulose 5-phosphate from D-glyceraldehyde 3-phosphate and pyruvate: step 1/1. Catalyzes the acyloin condensation reaction between C atoms 2 and 3 of pyruvate and glyceraldehyde 3-phosphate to yield 1-deoxy-D-xylulose-5-phosphate (DXP). The sequence is that of 1-deoxy-D-xylulose-5-phosphate synthase from Paraburkholderia xenovorans (strain LB400).